The sequence spans 159 residues: Oleosin Cor a 12 (159 aa).

Residues 1 to 10 (MADRPQQLQV) are compositionally biased toward polar residues. The interval 1–24 (MADRPQQLQVHPQRGHGHYEGGIK) is disordered. The next 3 membrane-spanning stretches (helical) occupy residues 45-65 (VGGTLLALAGLTLAGSVIGLL), 70-90 (LFIIFSPVLVPAAIVVGLAVA), and 92-112 (FLSSGALGLTGLSSLSWVLNY).

The protein belongs to the oleosin family. Expressed in seeds.

The protein resides in the lipid droplet. Its subcellular location is the membrane. In terms of biological role, may have a structural role to stabilize the lipid body during desiccation of the seed by preventing coalescence of the oil. Probably interacts with both lipid and phospholipid moieties of lipid bodies. May also provide recognition signals for specific lipase anchorage in lipolysis during seedling growth. This is Oleosin Cor a 12 from Corylus avellana (European hazel).